A 250-amino-acid polypeptide reads, in one-letter code: MSSDPTHQFLIQKIVPIEIGGIDFSFTNASLFMAASAAIAAGFLYFATSNRAIVPGRSQSVAEIFYEFIAKMLTEGAGKQGMQFFPLVFSLFMFVLTANLLGMFPYFFTVTSQIIVTAALAILVIGTVVVYGFYKHGFKFLNVFVPSGVPGILLPLVVTIEIISFLSRPISLSVRLFANMLAGHITLKVFAGFVASLGALGAVGVGGAVLPLIMTVALTGLEFLVAFLQAYVFAVLTCMYLNDAIHPGGH.

6 helical membrane passes run 29 to 49 (ASLF…FATS), 84 to 104 (FFPL…LGMF), 114 to 134 (IIVT…YGFY), 143 to 163 (VFVP…IEII), 193 to 213 (FVAS…LPLI), and 216 to 236 (VALT…FAVL).

This sequence belongs to the ATPase A chain family. As to quaternary structure, F-type ATPases have 2 components, CF(1) - the catalytic core - and CF(0) - the membrane proton channel. CF(1) has five subunits: alpha(3), beta(3), gamma(1), delta(1), epsilon(1). CF(0) has three main subunits: a(1), b(2) and c(9-12). The alpha and beta chains form an alternating ring which encloses part of the gamma chain. CF(1) is attached to CF(0) by a central stalk formed by the gamma and epsilon chains, while a peripheral stalk is formed by the delta and b chains.

The protein resides in the cell inner membrane. In terms of biological role, key component of the proton channel; it plays a direct role in the translocation of protons across the membrane. This Rhizobium johnstonii (strain DSM 114642 / LMG 32736 / 3841) (Rhizobium leguminosarum bv. viciae) protein is ATP synthase subunit a.